The primary structure comprises 96 residues: Elicitor peptide 3 (96 aa).

Positions 1–73 (MENLRNGEDN…EEEEEDGMTI (73 aa)) are excised as a propeptide. A disordered region spans residues 32-96 (SGLESSSSSS…PSSGKGGKHN (65 aa)). Residues 35–49 (ESSSSSSSSCDLSSS) are compositionally biased toward low complexity. Residues 52–71 (EEDESIDIKEEEEEEEEDGM) show a composition bias toward acidic residues.

The protein belongs to the brassicaceae elicitor peptide family.

Functionally, elicitor of plant defense. In Arabidopsis thaliana (Mouse-ear cress), this protein is Elicitor peptide 3 (PEP3).